The sequence spans 552 residues: Urocanate hydratase (552 aa).

NAD(+)-binding positions include 49–50 (GG), Gln-127, 173–175 (GMG), Asp-193, 239–240 (NA), 260–264 (QTSAH), 270–271 (YI), and Tyr-319. Cys-407 is a catalytic residue. Gly-489 lines the NAD(+) pocket.

The protein belongs to the urocanase family. The cofactor is NAD(+).

The protein localises to the cytoplasm. The enzyme catalyses 4-imidazolone-5-propanoate = trans-urocanate + H2O. Its pathway is amino-acid degradation; L-histidine degradation into L-glutamate; N-formimidoyl-L-glutamate from L-histidine: step 2/3. In terms of biological role, catalyzes the conversion of urocanate to 4-imidazolone-5-propionate. The sequence is that of Urocanate hydratase from Bacillus mycoides (strain KBAB4) (Bacillus weihenstephanensis).